Consider the following 562-residue polypeptide: NAD-dependent malic enzyme (562 aa).

Tyr-101 serves as the catalytic Proton donor. Arg-154 is an NAD(+) binding site. The Proton acceptor role is filled by Lys-172. Glu-243, Asp-244, and Asp-267 together coordinate a divalent metal cation. Positions 267 and 415 each coordinate NAD(+).

This sequence belongs to the malic enzymes family. As to quaternary structure, homotetramer. It depends on Mg(2+) as a cofactor. The cofactor is Mn(2+).

It carries out the reaction (S)-malate + NAD(+) = pyruvate + CO2 + NADH. The catalysed reaction is oxaloacetate + H(+) = pyruvate + CO2. The chain is NAD-dependent malic enzyme from Shewanella baltica (strain OS223).